Consider the following 250-residue polypeptide: UPF0309 protein BH0227 (250 aa).

One can recognise an SIS domain in the interval 31–214 (VAESIQNGGI…KRMADNGYEP (184 aa)).

It belongs to the UPF0309 family.

The protein is UPF0309 protein BH0227 of Halalkalibacterium halodurans (strain ATCC BAA-125 / DSM 18197 / FERM 7344 / JCM 9153 / C-125) (Bacillus halodurans).